A 327-amino-acid chain; its full sequence is DNA-directed RNA polymerase subunit alpha (327 aa).

Positions 1–233 (MVREKVKVST…NLFIPFLHVE (233 aa)) are alpha N-terminal domain (alpha-NTD). Positions 267–327 (LAFQYIFIDQ…KKILDILEKK (61 aa)) are alpha C-terminal domain (alpha-CTD).

Belongs to the RNA polymerase alpha chain family. In terms of assembly, in plastids the minimal PEP RNA polymerase catalytic core is composed of four subunits: alpha, beta, beta', and beta''. When a (nuclear-encoded) sigma factor is associated with the core the holoenzyme is formed, which can initiate transcription.

The protein resides in the plastid. It localises to the chloroplast. The catalysed reaction is RNA(n) + a ribonucleoside 5'-triphosphate = RNA(n+1) + diphosphate. Functionally, DNA-dependent RNA polymerase catalyzes the transcription of DNA into RNA using the four ribonucleoside triphosphates as substrates. The polypeptide is DNA-directed RNA polymerase subunit alpha (Nasturtium officinale (Watercress)).